An 836-amino-acid chain; its full sequence is TATA box-binding protein-associated factor RNA polymerase I subunit C (836 aa).

Disordered regions lie at residues 662 to 683 and 703 to 836; these read GDLSTLPRAEPPPAPQCSQQDE and HRGE…RMGF. The span at 738 to 754 shows a compositional bias: polar residues; it reads DASSAPRSQDLSTSEAR. Basic and acidic residues predominate over residues 780–796; the sequence is RQTLRDHTDKLPLKRDT. Thr802 carries the phosphothreonine modification. Positions 803–828 are enriched in polar residues; sequence PPSQASSLQTMSFRQQTPVHSGSQPP.

Component of the transcription factor SL1/TIF-IB complex, composed of TBP and at least TAF1A, TAF1B, TAF1C and TAF1D. In the complex interacts directly with TBP, TAF1A and TAF1B. Interaction of the SL1/TIF-IB subunits with TBP excludes interaction of TBP with the transcription factor IID (TFIID) subunits. Interacts with MYC and RRN3. Interacts with p53/TP53; the interaction prevents the association of SL1/TIF-IB with UBTF and represses RNA polymerase I transcription. Part of Pol I pre-initiation complex (PIC), in which Pol I core assembles with RRN3 and promoter-bound UTBF and SL1/TIF-IB complex.

Its subcellular location is the nucleus. The protein localises to the nucleolus. Functionally, component of the transcription factor SL1/TIF-IB complex, which is involved in the assembly of the PIC (pre-initiation complex) during RNA polymerase I-dependent transcription. The rate of PIC formation probably is primarily dependent on the rate of association of SL1/TIF-IB with the rDNA promoter. SL1/TIF-IB is involved in stabilization of nucleolar transcription factor 1/UBTF on rDNA. Formation of SL1/TIF-IB excludes the association of TBP with TFIID subunits. Recruits RNA polymerase I to the rRNA gene promoter via interaction with RRN3. The polypeptide is TATA box-binding protein-associated factor RNA polymerase I subunit C (Taf1c) (Mus musculus (Mouse)).